Reading from the N-terminus, the 712-residue chain is Elongation factor G (712 aa).

Residues 8–290 (TRYRNIGISA…AVIEFLPSPT (283 aa)) form the tr-type G domain. GTP-binding positions include 17-24 (AHIDAGKT), 88-92 (DTPGH), and 142-145 (NKMD).

This sequence belongs to the TRAFAC class translation factor GTPase superfamily. Classic translation factor GTPase family. EF-G/EF-2 subfamily.

Its subcellular location is the cytoplasm. Catalyzes the GTP-dependent ribosomal translocation step during translation elongation. During this step, the ribosome changes from the pre-translocational (PRE) to the post-translocational (POST) state as the newly formed A-site-bound peptidyl-tRNA and P-site-bound deacylated tRNA move to the P and E sites, respectively. Catalyzes the coordinated movement of the two tRNA molecules, the mRNA and conformational changes in the ribosome. The protein is Elongation factor G of Acinetobacter baumannii (strain SDF).